The chain runs to 261 residues: Vacuolar protein sorting-associated protein 37D (261 aa).

Residues 93–182 (AENCADKLQR…RRRERSAQPA (90 aa)) form the VPS37 C-terminal domain. The tract at residues 172–261 (LRRRERSAQP…RPSQPEPPHR (90 aa)) is disordered. The span at 181–195 (PAPTTAAAAAAAATA) shows a compositional bias: low complexity. 2 stretches are compositionally biased toward pro residues: residues 215 to 224 (GPPPAVPRSL) and 231 to 261 (PVPP…PPHR).

The protein belongs to the VPS37 family. Component of the ESCRT-I complex (endosomal sorting complex required for transport I) which consists of TSG101, VPS28, a VPS37 protein (VPS37A to -D) and MVB12A or MVB12B in a 1:1:1:1 stoichiometry. Interacts with TSG101 and MVB12A. Component of the ESCRT-I complex (endosomal sorting complex required for transport I) which consists of TSG101, VPS28, a VPS37 protein (VPS37A to -D) and UBAP1 in a 1:1:1:1 stoichiometry.

The protein localises to the late endosome membrane. Component of the ESCRT-I complex, a regulator of vesicular trafficking process. Required for the sorting of endocytic ubiquitinated cargos into multivesicular bodies. May be involved in cell growth and differentiation. This chain is Vacuolar protein sorting-associated protein 37D, found in Mus musculus (Mouse).